Reading from the N-terminus, the 505-residue chain is uncharacterized protein (505 aa).

The Radical SAM core domain maps to 193-440; that stretch reads CTNKKCNLCE…LEIKKKYIGR (248 aa). 3 residues coordinate [4Fe-4S] cluster: Cys208, Cys216, and Cys219. The TRAM domain maps to 435–499; sequence KKYIGRVLEV…EKYLEGRILK (65 aa).

Requires [4Fe-4S] cluster as cofactor.

This is an uncharacterized protein from Methanocaldococcus jannaschii (strain ATCC 43067 / DSM 2661 / JAL-1 / JCM 10045 / NBRC 100440) (Methanococcus jannaschii).